The chain runs to 666 residues: Translation factor guf1, mitochondrial (666 aa).

The N-terminal 44 residues, 1–44 (MRGCLQLGRWLSAAPRCQAASLRPPTVFPSYRYNRSFSTTTIYY), are a transit peptide targeting the mitochondrion. In terms of domain architecture, tr-type G spans 68 to 248 (ERFRNFCIVA…TVVEKVPAPI (181 aa)). GTP-binding positions include 77–84 (AHVDHGKS), 141–145 (DTPGH), and 195–198 (NKVD).

The protein belongs to the TRAFAC class translation factor GTPase superfamily. Classic translation factor GTPase family. LepA subfamily.

It is found in the mitochondrion inner membrane. The enzyme catalyses GTP + H2O = GDP + phosphate + H(+). In terms of biological role, promotes mitochondrial protein synthesis. May act as a fidelity factor of the translation reaction, by catalyzing a one-codon backward translocation of tRNAs on improperly translocated ribosomes. Binds to mitochondrial ribosomes in a GTP-dependent manner. This chain is Translation factor guf1, mitochondrial (guf1), found in Penicillium rubens (strain ATCC 28089 / DSM 1075 / NRRL 1951 / Wisconsin 54-1255) (Penicillium chrysogenum).